Consider the following 201-residue polypeptide: Recombination protein RecR (201 aa).

A C4-type zinc finger spans residues C57–C72. The Toprim domain maps to G81–P176.

Belongs to the RecR family.

May play a role in DNA repair. It seems to be involved in an RecBC-independent recombinational process of DNA repair. It may act with RecF and RecO. In Escherichia coli O6:K15:H31 (strain 536 / UPEC), this protein is Recombination protein RecR.